The following is a 434-amino-acid chain: Histidinol dehydrogenase (434 aa).

NAD(+) is bound by residues Tyr-130, Gln-188, and Asn-211. Substrate is bound by residues Ser-237, Gln-259, and His-262. 2 residues coordinate Zn(2+): Gln-259 and His-262. Catalysis depends on proton acceptor residues Glu-326 and His-327. Substrate contacts are provided by His-327, Asp-360, Glu-414, and His-419. Asp-360 provides a ligand contact to Zn(2+). His-419 contributes to the Zn(2+) binding site.

Belongs to the histidinol dehydrogenase family. In terms of assembly, homodimer. Requires Zn(2+) as cofactor. Mn(2+) is required as a cofactor.

It catalyses the reaction L-histidinol + 2 NAD(+) + H2O = L-histidine + 2 NADH + 3 H(+). It participates in amino-acid biosynthesis; L-histidine biosynthesis; L-histidine from 5-phospho-alpha-D-ribose 1-diphosphate: step 9/9. Its activity is regulated as follows. Activity is lost when the metal is removed through urea denaturation or chelation, and can be regained by addition of metal. Functionally, catalyzes the sequential NAD-dependent oxidations of L-histidinol to L-histidinaldehyde and then to L-histidine. The chain is Histidinol dehydrogenase (hisD) from Salmonella typhimurium (strain LT2 / SGSC1412 / ATCC 700720).